The sequence spans 492 residues: MKATDNTTTGPGWNFDNSYARLPDYLYTRLDPTPVRAPQMAIFNSSLSDALGLATNTLAGDEGVAIFSGNRIPEGAQPICQAYAGHQFGYFTMLGDGRAHLLGEHITPTGQRFDIQLKGSGRTPFSRSGDGRAVLGPMLREYIISEAMHALGISTTRSLAVVTTGEPVYRETPLPGAILTRVAASHIRVGTFEYLAAQGNRDGIRTLAEYTIHRHFPELLQADNPFLALLQTVLEKQVELVVRWLHVGFIHGVMNTDNMALCGESIDYGPCAFMDSYDPDTVFSSIDQDGRYAFARQPAMAQWNVTRFAETLLPVLHDEGEKAVELANRSLATFPDIFQRLRMDGMRAKLGLFTKEDADMSLMQDLLTCMQQNQADYTNTLRDLALETLPDTPFFREPSFTAWHQRWQTRLTRQEEPVEASRALMRAHNPAFIPRNHRVEEALAAAQERHDFTVLEKLLEVLSRPYDDQPEHAEYRQPPPPSEKPYQTFCGT.

ATP is bound by residues glycine 95, glycine 97, arginine 98, lysine 118, aspartate 130, glycine 131, arginine 181, and arginine 188. Residue aspartate 257 is the Proton acceptor of the active site. The Mg(2+) site is built by asparagine 258 and aspartate 267. Residue aspartate 267 coordinates ATP. Residues 466-475 (YDDQPEHAEY) show a composition bias toward basic and acidic residues. The tract at residues 466 to 492 (YDDQPEHAEYRQPPPPSEKPYQTFCGT) is disordered.

It belongs to the SELO family. Mg(2+) serves as cofactor. The cofactor is Mn(2+).

The catalysed reaction is L-seryl-[protein] + ATP = 3-O-(5'-adenylyl)-L-seryl-[protein] + diphosphate. The enzyme catalyses L-threonyl-[protein] + ATP = 3-O-(5'-adenylyl)-L-threonyl-[protein] + diphosphate. It catalyses the reaction L-tyrosyl-[protein] + ATP = O-(5'-adenylyl)-L-tyrosyl-[protein] + diphosphate. It carries out the reaction L-histidyl-[protein] + UTP = N(tele)-(5'-uridylyl)-L-histidyl-[protein] + diphosphate. The catalysed reaction is L-seryl-[protein] + UTP = O-(5'-uridylyl)-L-seryl-[protein] + diphosphate. The enzyme catalyses L-tyrosyl-[protein] + UTP = O-(5'-uridylyl)-L-tyrosyl-[protein] + diphosphate. Its function is as follows. Nucleotidyltransferase involved in the post-translational modification of proteins. It can catalyze the addition of adenosine monophosphate (AMP) or uridine monophosphate (UMP) to a protein, resulting in modifications known as AMPylation and UMPylation. This is Protein nucleotidyltransferase YdiU from Syntrophotalea carbinolica (strain DSM 2380 / NBRC 103641 / GraBd1) (Pelobacter carbinolicus).